The following is a 117-amino-acid chain: Large ribosomal subunit protein bL19 (117 aa).

It belongs to the bacterial ribosomal protein bL19 family.

Functionally, this protein is located at the 30S-50S ribosomal subunit interface and may play a role in the structure and function of the aminoacyl-tRNA binding site. The polypeptide is Large ribosomal subunit protein bL19 (Colwellia psychrerythraea (strain 34H / ATCC BAA-681) (Vibrio psychroerythus)).